The primary structure comprises 245 residues: MNDWMPIAKEYDPLKAGSIDGTDEDPHDRAVWRAMLARYTPNKGVTGDPLLTLFVARLNLQTKEEKLKEVFSRYGDIRRLRLVRDLVTGFSKGYAFIEYKDERSLLKAYRDADGLVIDQHEIFVDYELERTLKGWIPRRLGGGLGGKKESGQLRFGGRDRPFRKPINLPVVKNDQFREGKRERRERSRSRERHWDSRMRDHHDRGREKRWQEREPARAWPEGDWERERDFRDDRVKGREKRDRSK.

In terms of domain architecture, RRM spans 51–129 (LTLFVARLNL…HEIFVDYELE (79 aa)). Positions 146 to 162 (GKKESGQLRFGGRDRPF) are enriched in basic and acidic residues. The tract at residues 146 to 165 (GKKESGQLRFGGRDRPFRKP) is disordered. Residue Lys-172 forms a Glycyl lysine isopeptide (Lys-Gly) (interchain with G-Cter in SUMO2) linkage. The segment at 173-222 (NDQFREGKRERRERSRSRERHWDSRMRDHHDRGREKRWQEREPARAWPEG) is disordered. Composition is skewed to basic and acidic residues over residues 174 to 185 (DQFREGKRERRE) and 192 to 216 (RHWD…REPA).

Component of the U11/U12 snRNPs that are part of the U12-type spliceosome.

It localises to the nucleus. The polypeptide is U11/U12 small nuclear ribonucleoprotein 35 kDa protein (SNRNP35) (Bos taurus (Bovine)).